Reading from the N-terminus, the 385-residue chain is Pre-mRNA-splicing factor slt-11 (385 aa).

Residues arginine 157 to proline 233 are disordered. Residues glycine 171 to glycine 187 are compositionally biased toward low complexity. One can recognise an RRM domain in the interval methionine 239–proline 312. The segment covering lysine 320–arginine 331 has biased composition (basic and acidic residues). The tract at residues lysine 320–alanine 370 is disordered.

The protein belongs to the SLT11 family. Associated with the spliceosome.

Its subcellular location is the nucleus. Functionally, involved in pre-mRNA splicing. Facilitates the cooperative formation of U2/U6 helix II in association with stem II in the spliceosome. Binds to RNA. This Neurospora crassa (strain ATCC 24698 / 74-OR23-1A / CBS 708.71 / DSM 1257 / FGSC 987) protein is Pre-mRNA-splicing factor slt-11 (slt-11).